The sequence spans 470 residues: Fumarate reductase 1 (470 aa).

6–20 (VVVIGTGLAGLAAAN) is a binding site for FAD. Serine 66 carries the phosphoserine modification. Active-site residues include histidine 249 and arginine 272.

This sequence belongs to the FAD-dependent oxidoreductase 2 family. FRD/SDH subfamily. FAD serves as cofactor. Post-translationally, the N-terminus is blocked.

The protein resides in the cytoplasm. It carries out the reaction succinate + NAD(+) = fumarate + NADH + H(+). In terms of biological role, irreversibly catalyzes the reduction of fumarate to succinate. Together with the second isozyme of soluble fumarate reductase (OSM1), essential for anaerobic growth. Involved in maintaining redox balance. Reduction of fumarate is the main source of succinate during fermentation, and under anaerobic conditions, the formation of succinate is strictly required for the reoxidation of FADH(2). This is Fumarate reductase 1 (FRD1) from Saccharomyces cerevisiae (strain ATCC 204508 / S288c) (Baker's yeast).